A 419-amino-acid chain; its full sequence is Indole prenyltransferase tdiB (419 aa).

58-59 (PS) provides a ligand contact to L-tryptophan. Substrate-binding residues include arginine 81, lysine 165, tyrosine 167, arginine 236, lysine 238, tyrosine 240, tyrosine 330, and tyrosine 394.

It belongs to the tryptophan dimethylallyltransferase family.

It carries out the reaction didemethylasterriquinone D + dimethylallyl diphosphate = asterriquinone C1 + diphosphate. Its pathway is secondary metabolite biosynthesis. Functionally, indole prenyltransferase; part of the gene cluster that mediates the biosynthesis of terrequinone A, an antitumor agent. The first step in the biosynthetic pathway for terrequinone A is formation of indole pyruvic acid (IPA) from L-tryptophan by the aminotransferase tdiD. The nonribosomal peptide synthase tdiA then immediately converts unstable IPA to didemethylasterriquinone D (DDAQ D), via condensation of 2 IPA molecules. The symmetric connectivity of the 2 IPA molecules is thought to arise by head-to-tail dual Claisen condensations facilitated by the TE domain. TdiB then catalyzes reverse prenylation by transferring dimethylallyl diphosphate to carbon atom 2' of DDAQ D, to yield asterriquinone C-1. Finally, tdiC and tdiE enzymes robustly convert asterriquinone C-1 to terrequinone A via a transformation involving regular prenylation at carbon atom 5, which requires elimination of the hydroxy group on C-5. The sequence is that of Indole prenyltransferase tdiB from Emericella nidulans (strain FGSC A4 / ATCC 38163 / CBS 112.46 / NRRL 194 / M139) (Aspergillus nidulans).